We begin with the raw amino-acid sequence, 101 residues long: Small ribosomal subunit protein bS18c (101 aa).

The protein belongs to the bacterial ribosomal protein bS18 family. In terms of assembly, part of the 30S ribosomal subunit.

The protein resides in the plastid. Its subcellular location is the chloroplast. This Carica papaya (Papaya) protein is Small ribosomal subunit protein bS18c.